Reading from the N-terminus, the 685-residue chain is Methionine--tRNA ligase (685 aa).

Residues 12–22 (PYANGSIHLGH) carry the 'HIGH' region motif. Residues Cys143, Cys146, Cys156, and Cys159 each contribute to the Zn(2+) site. The short motif at 339 to 343 (KMSKS) is the 'KMSKS' region element. Lys342 serves as a coordination point for ATP. The region spanning 582-685 (DFMKIDMRVA…TGAQPGDKVG (104 aa)) is the tRNA-binding domain.

It belongs to the class-I aminoacyl-tRNA synthetase family. MetG type 1 subfamily. Homodimer. It depends on Zn(2+) as a cofactor.

Its subcellular location is the cytoplasm. It carries out the reaction tRNA(Met) + L-methionine + ATP = L-methionyl-tRNA(Met) + AMP + diphosphate. Is required not only for elongation of protein synthesis but also for the initiation of all mRNA translation through initiator tRNA(fMet) aminoacylation. In Neisseria meningitidis serogroup B (strain ATCC BAA-335 / MC58), this protein is Methionine--tRNA ligase.